The sequence spans 342 residues: S-adenosylmethionine:tRNA ribosyltransferase-isomerase (342 aa).

It belongs to the QueA family. In terms of assembly, monomer.

The protein resides in the cytoplasm. The enzyme catalyses 7-aminomethyl-7-carbaguanosine(34) in tRNA + S-adenosyl-L-methionine = epoxyqueuosine(34) in tRNA + adenine + L-methionine + 2 H(+). It participates in tRNA modification; tRNA-queuosine biosynthesis. Functionally, transfers and isomerizes the ribose moiety from AdoMet to the 7-aminomethyl group of 7-deazaguanine (preQ1-tRNA) to give epoxyqueuosine (oQ-tRNA). This Listeria welshimeri serovar 6b (strain ATCC 35897 / DSM 20650 / CCUG 15529 / CIP 8149 / NCTC 11857 / SLCC 5334 / V8) protein is S-adenosylmethionine:tRNA ribosyltransferase-isomerase.